We begin with the raw amino-acid sequence, 219 residues long: Pyridoxine/pyridoxamine 5'-phosphate oxidase (219 aa).

A disordered region spans residues 1 to 23 (MTSSVIPPSPSAADYAAEGDRPL). FMN contacts are provided by residues 66–71 (RIVLLK), 81–82 (FT), lysine 88, and glutamine 110. Lysine 71 lines the substrate pocket. Substrate contacts are provided by tyrosine 128, arginine 132, and serine 136. Residues 145-146 (QS) and tryptophan 191 contribute to the FMN site. 197–199 (RMH) contacts substrate. Arginine 201 is a binding site for FMN.

It belongs to the pyridoxamine 5'-phosphate oxidase family. In terms of assembly, homodimer. It depends on FMN as a cofactor.

It catalyses the reaction pyridoxamine 5'-phosphate + O2 + H2O = pyridoxal 5'-phosphate + H2O2 + NH4(+). It carries out the reaction pyridoxine 5'-phosphate + O2 = pyridoxal 5'-phosphate + H2O2. It participates in cofactor metabolism; pyridoxal 5'-phosphate salvage; pyridoxal 5'-phosphate from pyridoxamine 5'-phosphate: step 1/1. The protein operates within cofactor metabolism; pyridoxal 5'-phosphate salvage; pyridoxal 5'-phosphate from pyridoxine 5'-phosphate: step 1/1. Its function is as follows. Catalyzes the oxidation of either pyridoxine 5'-phosphate (PNP) or pyridoxamine 5'-phosphate (PMP) into pyridoxal 5'-phosphate (PLP). This chain is Pyridoxine/pyridoxamine 5'-phosphate oxidase, found in Hyphomonas neptunium (strain ATCC 15444).